The primary structure comprises 318 residues: tRNA U34 carboxymethyltransferase (318 aa).

Residues lysine 88, tryptophan 102, lysine 107, glycine 126, 176 to 177, methionine 192, tyrosine 196, and arginine 311 contribute to the carboxy-S-adenosyl-L-methionine site; that span reads LE.

Belongs to the class I-like SAM-binding methyltransferase superfamily. CmoB family. In terms of assembly, homotetramer.

It catalyses the reaction carboxy-S-adenosyl-L-methionine + 5-hydroxyuridine(34) in tRNA = 5-carboxymethoxyuridine(34) in tRNA + S-adenosyl-L-homocysteine + H(+). Functionally, catalyzes carboxymethyl transfer from carboxy-S-adenosyl-L-methionine (Cx-SAM) to 5-hydroxyuridine (ho5U) to form 5-carboxymethoxyuridine (cmo5U) at position 34 in tRNAs. The sequence is that of tRNA U34 carboxymethyltransferase from Pseudomonas putida (strain GB-1).